The chain runs to 156 residues: 6,7-dimethyl-8-ribityllumazine synthase (156 aa).

Residues Phe22, 57 to 59 (AYE), and 81 to 83 (TVI) contribute to the 5-amino-6-(D-ribitylamino)uracil site. 86-87 (GT) is a (2S)-2-hydroxy-3-oxobutyl phosphate binding site. The Proton donor role is filled by His89. Phe114 contacts 5-amino-6-(D-ribitylamino)uracil. Arg128 serves as a coordination point for (2S)-2-hydroxy-3-oxobutyl phosphate.

It belongs to the DMRL synthase family. As to quaternary structure, forms an icosahedral capsid composed of 60 subunits, arranged as a dodecamer of pentamers.

It carries out the reaction (2S)-2-hydroxy-3-oxobutyl phosphate + 5-amino-6-(D-ribitylamino)uracil = 6,7-dimethyl-8-(1-D-ribityl)lumazine + phosphate + 2 H2O + H(+). It participates in cofactor biosynthesis; riboflavin biosynthesis; riboflavin from 2-hydroxy-3-oxobutyl phosphate and 5-amino-6-(D-ribitylamino)uracil: step 1/2. Functionally, catalyzes the formation of 6,7-dimethyl-8-ribityllumazine by condensation of 5-amino-6-(D-ribitylamino)uracil with 3,4-dihydroxy-2-butanone 4-phosphate. This is the penultimate step in the biosynthesis of riboflavin. This is 6,7-dimethyl-8-ribityllumazine synthase from Mannheimia succiniciproducens (strain KCTC 0769BP / MBEL55E).